The primary structure comprises 783 residues: Probable galactinol--sucrose galactosyltransferase 5 (783 aa).

Residues serine 9 and serine 11 each carry the phosphoserine modification.

It belongs to the glycosyl hydrolases 36 family.

The enzyme catalyses alpha-D-galactosyl-(1-&gt;3)-1D-myo-inositol + sucrose = raffinose + myo-inositol. Functionally, transglycosidase operating by a ping-pong reaction mechanism. Involved in the synthesis of raffinose, a major soluble carbohydrate in seeds, roots and tubers. This chain is Probable galactinol--sucrose galactosyltransferase 5 (RFS5), found in Arabidopsis thaliana (Mouse-ear cress).